A 484-amino-acid polypeptide reads, in one-letter code: Glutamyl-tRNA(Gln) amidotransferase subunit A (484 aa).

Active-site charge relay system residues include K78 and S153. S177 serves as the catalytic Acyl-ester intermediate.

The protein belongs to the amidase family. GatA subfamily. Heterotrimer of A, B and C subunits.

The enzyme catalyses L-glutamyl-tRNA(Gln) + L-glutamine + ATP + H2O = L-glutaminyl-tRNA(Gln) + L-glutamate + ADP + phosphate + H(+). Functionally, allows the formation of correctly charged Gln-tRNA(Gln) through the transamidation of misacylated Glu-tRNA(Gln) in organisms which lack glutaminyl-tRNA synthetase. The reaction takes place in the presence of glutamine and ATP through an activated gamma-phospho-Glu-tRNA(Gln). In Thermodesulfovibrio yellowstonii (strain ATCC 51303 / DSM 11347 / YP87), this protein is Glutamyl-tRNA(Gln) amidotransferase subunit A.